The primary structure comprises 599 residues: MQTQSPFGPLLGISSSLLPSPVTVAAAAAAANGHQGPVSLTTFPSAFAAFASQIRNNQLQSLLQSQIQALNGGMGSPGNGPGTPLSRNNYAHHHQQHQNQQHVGKIRGTTEYPLRKRVGGSTVKTAKVWRYFDELPTIEQAAECRICRKKIKATNSSTTGMIRHLRSCHVQEYQLVQEARQNSMIVKMEEKARAKLLREMNEKVITNGIENTPIVKKESQTESQKSPSASSSASDTASSASSSHFSTNPLIGLPAPVAIKPPAPPTPSNSILNLSQSQNQCQNQNPMFQSQNIKNEPTDVEEEDLEQKRSRDILHRPSDLGTKMFFSSPRTFNLTSAFSSITPLEDHKFQKKIEDDHKIHMQIALMLLLDQQPCQIIDRPGIRSLFKFVLPEYHMPSGDVFQATIVPQLLNQMKQQIEALVHNSSSLSSIPDQVMTSSSATSSYEDVSVNESQMAGPNVGDEEEEIMEEEVEEDENVEIEDDTSSASSSIDTDTCDAMASFIHFIGNDAFPHDELISLLSVVTNLFTYFSTRPHVQTHLQMTIIQPTSQPLVQQVQFVTSNLSIISDYIRQTPDMQLLPLAVNQEAMLEKLVDHIDQLV.

Residues 70–104 (LNGGMGSPGNGPGTPLSRNNYAHHHQQHQNQQHVG) are disordered. Residues 72 to 81 (GGMGSPGNGP) show a composition bias toward gly residues. The BED-type zinc finger occupies 123–176 (VKTAKVWRYFDELPTIEQAAECRICRKKIKATNSSTTGMIRHLRSCHVQEYQLV). 4 residues coordinate Zn(2+): Cys-144, Cys-147, His-164, and His-169. 2 disordered regions span residues 208-283 (GIEN…QCQN) and 440-491 (ATSS…SSID). Composition is skewed to low complexity over residues 223–246 (SQKSPSASSSASDTASSASSSHFS) and 268–283 (SNSILNLSQSQNQCQN). The segment covering 440–455 (ATSSYEDVSVNESQMA) has biased composition (polar residues). Over residues 460-483 (GDEEEEIMEEEVEEDENVEIEDDT) the composition is skewed to acidic residues.

As to expression, expressed in neuronal cell bodies in the ventral cord and HSN neurons.

Its subcellular location is the nucleus. Probable transcription factor. Involved in vulval organogenesis. During vulval development, may play a role in the regulation of cell cycle regulators such as cul-1. Positively modulates expression of homeobox protein lin-39, perhaps by binding to regulatory regions of the lin-39 gene, acting in the vulval lineage. Plays a role in larval molting. The sequence is that of Zinc finger BED domain-containing protein 3 from Caenorhabditis elegans.